Here is a 507-residue protein sequence, read N- to C-terminus: Probable Xaa-Pro aminopeptidase TRV_02643 (507 aa).

Residues D275, D286, E434, and E478 each contribute to the Mn(2+) site.

Belongs to the peptidase M24B family. Mn(2+) serves as cofactor.

It carries out the reaction Release of any N-terminal amino acid, including proline, that is linked to proline, even from a dipeptide or tripeptide.. In terms of biological role, catalyzes the removal of a penultimate prolyl residue from the N-termini of peptides. This is Probable Xaa-Pro aminopeptidase TRV_02643 from Trichophyton verrucosum (strain HKI 0517).